The primary structure comprises 356 residues: 5-formaminoimidazole-4-carboxamide-1-(beta)-D-ribofuranosyl 5'-monophosphate synthetase 2 (356 aa).

5-amino-1-(5-phospho-beta-D-ribosyl)imidazole-4-carboxamide is bound by residues His-27 and Ser-94. The 233-residue stretch at 101–333 folds into the ATP-grasp domain; sequence RENFTGMAVP…YSDLMQKRLS (233 aa). ATP is bound by residues 145–196 and Glu-226; that span reads PHDI…TRYD. 5-amino-1-(5-phospho-beta-D-ribosyl)imidazole-4-carboxamide is bound at residue Asn-255. Mg(2+) contacts are provided by Glu-293 and Glu-306.

This sequence belongs to the phosphohexose mutase family. Mg(2+) serves as cofactor. Requires Mn(2+) as cofactor.

It carries out the reaction 5-amino-1-(5-phospho-beta-D-ribosyl)imidazole-4-carboxamide + formate + ATP = 5-formamido-1-(5-phospho-D-ribosyl)imidazole-4-carboxamide + ADP + phosphate. The protein operates within purine metabolism; IMP biosynthesis via de novo pathway; 5-formamido-1-(5-phospho-D-ribosyl)imidazole-4-carboxamide from 5-amino-1-(5-phospho-D-ribosyl)imidazole-4-carboxamide (formate route): step 1/1. In terms of biological role, catalyzes the ATP- and formate-dependent formylation of 5-aminoimidazole-4-carboxamide-1-beta-d-ribofuranosyl 5'-monophosphate (AICAR) to 5-formaminoimidazole-4-carboxamide-1-beta-d-ribofuranosyl 5'-monophosphate (FAICAR) in the absence of folates. The sequence is that of 5-formaminoimidazole-4-carboxamide-1-(beta)-D-ribofuranosyl 5'-monophosphate synthetase 2 from Methanosarcina mazei (strain ATCC BAA-159 / DSM 3647 / Goe1 / Go1 / JCM 11833 / OCM 88) (Methanosarcina frisia).